Reading from the N-terminus, the 458-residue chain is Bifunctional protein GlmU (458 aa).

A pyrophosphorylase region spans residues 1-229; the sequence is MNKFAIVLAA…FDESLGVNDR (229 aa). Residues 8–11, Lys22, Gln72, and 77–78 contribute to the UDP-N-acetyl-alpha-D-glucosamine site; these read LAAG and GT. Asp102 provides a ligand contact to Mg(2+). UDP-N-acetyl-alpha-D-glucosamine-binding residues include Gly139, Glu154, Asn169, and Asn227. Position 227 (Asn227) interacts with Mg(2+). The interval 230 to 250 is linker; the sequence is VALSQAEATMRKRINHEHMVN. Residues 251 to 458 form an N-acetyltransferase region; it reads GVTLIDPATT…AKKMPHYRGQ (208 aa). Positions 332 and 350 each coordinate UDP-N-acetyl-alpha-D-glucosamine. His362 functions as the Proton acceptor in the catalytic mechanism. UDP-N-acetyl-alpha-D-glucosamine-binding residues include Tyr365 and Asn376. The acetyl-CoA site is built by Ala379, Ser404, Ala422, and Arg439.

The protein in the N-terminal section; belongs to the N-acetylglucosamine-1-phosphate uridyltransferase family. In the C-terminal section; belongs to the transferase hexapeptide repeat family. Homotrimer. The cofactor is Mg(2+).

Its subcellular location is the cytoplasm. The enzyme catalyses alpha-D-glucosamine 1-phosphate + acetyl-CoA = N-acetyl-alpha-D-glucosamine 1-phosphate + CoA + H(+). It catalyses the reaction N-acetyl-alpha-D-glucosamine 1-phosphate + UTP + H(+) = UDP-N-acetyl-alpha-D-glucosamine + diphosphate. The protein operates within nucleotide-sugar biosynthesis; UDP-N-acetyl-alpha-D-glucosamine biosynthesis; N-acetyl-alpha-D-glucosamine 1-phosphate from alpha-D-glucosamine 6-phosphate (route II): step 2/2. Its pathway is nucleotide-sugar biosynthesis; UDP-N-acetyl-alpha-D-glucosamine biosynthesis; UDP-N-acetyl-alpha-D-glucosamine from N-acetyl-alpha-D-glucosamine 1-phosphate: step 1/1. It participates in bacterial outer membrane biogenesis; LPS lipid A biosynthesis. Catalyzes the last two sequential reactions in the de novo biosynthetic pathway for UDP-N-acetylglucosamine (UDP-GlcNAc). The C-terminal domain catalyzes the transfer of acetyl group from acetyl coenzyme A to glucosamine-1-phosphate (GlcN-1-P) to produce N-acetylglucosamine-1-phosphate (GlcNAc-1-P), which is converted into UDP-GlcNAc by the transfer of uridine 5-monophosphate (from uridine 5-triphosphate), a reaction catalyzed by the N-terminal domain. This Lactococcus lactis subsp. cremoris (strain MG1363) protein is Bifunctional protein GlmU.